Consider the following 345-residue polypeptide: Eukaryotic translation initiation factor 3 subunit F (345 aa).

One can recognise an MPN domain in the interval 30–166 (VVIQPQAIFS…TRAYISAPVG (137 aa)). The tract at residues 310 to 345 (EGASAEAGAQRGQRGGKGGRGGQQRTQERASEEVRA) is disordered. Residues 312 to 321 (ASAEAGAQRG) show a composition bias toward low complexity. The segment covering 322–331 (QRGGKGGRGG) has biased composition (gly residues). The span at 335–345 (TQERASEEVRA) shows a compositional bias: basic and acidic residues.

Belongs to the eIF-3 subunit F family. As to quaternary structure, component of the eukaryotic translation initiation factor 3 (eIF-3) complex.

It localises to the cytoplasm. In terms of biological role, component of the eukaryotic translation initiation factor 3 (eIF-3) complex, which is involved in protein synthesis of a specialized repertoire of mRNAs and, together with other initiation factors, stimulates binding of mRNA and methionyl-tRNAi to the 40S ribosome. The eIF-3 complex specifically targets and initiates translation of a subset of mRNAs involved in cell proliferation. The protein is Eukaryotic translation initiation factor 3 subunit F of Aspergillus fumigatus (strain CBS 144.89 / FGSC A1163 / CEA10) (Neosartorya fumigata).